The primary structure comprises 557 residues: TGF-beta receptor type-2 (557 aa).

The first 23 residues, 1–23, serve as a signal peptide directing secretion; it reads MPPRLRPLLLRVSLWVLVGSSSP. Residues 24–155 lie on the Extracellular side of the membrane; that stretch reads ALLHDRSKEN…KPEEKDEISK (132 aa). 6 cysteine pairs are disulfide-bonded: C41–C74, C44–C61, C51–C57, C67–C91, C111–C126, and C128–C133. Residues N62 and N84 are each glycosylated (N-linked (GlcNAc...) asparagine). The helical transmembrane segment at 156-176 threads the bilayer; the sequence is VTIISLVPLLVISVAVIVIFY. The Cytoplasmic segment spans residues 177–557; sequence AYRTHKKRKL…PEDGSVTTAK (381 aa). Positions 234-537 constitute a Protein kinase domain; it reads IELDIVVGKG…FSEFKHHDKL (304 aa). ATP contacts are provided by residues 240-248 and K267; that span reads VGKGRFAEV. The Proton acceptor role is filled by D369.

Belongs to the protein kinase superfamily. TKL Ser/Thr protein kinase family. TGFB receptor subfamily. In terms of assembly, heterohexamer; TGFB1, TGFB2 and TGFB3 homodimeric ligands assemble a functional receptor composed of two TGFBR1 and TGFBR2 heterodimers to form a ligand-receptor heterohexamer. The cofactor is Mg(2+). Mn(2+) is required as a cofactor. In terms of processing, phosphorylated on a Ser/Thr residue in the cytoplasmic domain. Detected at low levels in embryonic heart, brain and lung. Detected at high levels in hatchling heart and lung.

It is found in the cell membrane. The protein localises to the membrane raft. The enzyme catalyses L-threonyl-[receptor-protein] + ATP = O-phospho-L-threonyl-[receptor-protein] + ADP + H(+). It carries out the reaction L-seryl-[receptor-protein] + ATP = O-phospho-L-seryl-[receptor-protein] + ADP + H(+). Its function is as follows. Transmembrane serine/threonine kinase forming with the TGF-beta type I serine/threonine kinase receptor, TGFBR1, the non-promiscuous receptor for the TGF-beta cytokines TGFB1, TGFB2 and TGFB3. Transduces the TGFB1, TGFB2 and TGFB3 signal from the cell surface to the cytoplasm and is thus regulating a plethora of physiological and pathological processes including cell cycle arrest in epithelial and hematopoietic cells, control of mesenchymal cell proliferation and differentiation, wound healing, extracellular matrix production, immunosuppression and carcinogenesis. The formation of the receptor complex composed of 2 TGFBR1 and 2 TGFBR2 molecules symmetrically bound to the cytokine dimer results in the phosphorylation and the activation of TGFRB1 by the constitutively active TGFBR2. Activated TGFBR1 phosphorylates SMAD2 which dissociates from the receptor and interacts with SMAD4. The SMAD2-SMAD4 complex is subsequently translocated to the nucleus where it modulates the transcription of the TGF-beta-regulated genes. This constitutes the canonical SMAD-dependent TGF-beta signaling cascade. Also involved in non-canonical, SMAD-independent TGF-beta signaling pathways. This Gallus gallus (Chicken) protein is TGF-beta receptor type-2 (TGFBR2).